The following is an 87-amino-acid chain: UPF0335 protein RHECIAT_CH0003797 (87 aa).

Belongs to the UPF0335 family.

This Rhizobium etli (strain CIAT 652) protein is UPF0335 protein RHECIAT_CH0003797.